The following is a 443-amino-acid chain: Tol-Pal system protein TolB (443 aa).

An N-terminal signal peptide occupies residues 1–31 (MTRLAKGKWRSTLGAMMALAVMVAAIPQARA). A compositionally biased stretch (polar residues) spans 423-432 (NERQISTPTE). The interval 423-443 (NERQISTPTEASDPAWSPLLP) is disordered.

Belongs to the TolB family. The Tol-Pal system is composed of five core proteins: the inner membrane proteins TolA, TolQ and TolR, the periplasmic protein TolB and the outer membrane protein Pal. They form a network linking the inner and outer membranes and the peptidoglycan layer.

It is found in the periplasm. In terms of biological role, part of the Tol-Pal system, which plays a role in outer membrane invagination during cell division and is important for maintaining outer membrane integrity. This is Tol-Pal system protein TolB from Rhodospirillum rubrum (strain ATCC 11170 / ATH 1.1.1 / DSM 467 / LMG 4362 / NCIMB 8255 / S1).